A 150-amino-acid polypeptide reads, in one-letter code: Sec-independent protein translocase protein TatB (150 aa).

A helical membrane pass occupies residues 1–21; sequence MFDLSWSEIALVGVVALIVIG. The segment covering 77-86 has biased composition (basic and acidic residues); it reads KIDQAIDPDG. The disordered stretch occupies residues 77-150; it reads KIDQAIDPDG…RTDGSLPPQD (74 aa). The segment covering 109 to 135 has biased composition (pro residues); the sequence is AAPPSLPPQAPAQPVPPATGAAPPSPS.

The protein belongs to the TatB family. As to quaternary structure, the Tat system comprises two distinct complexes: a TatABC complex, containing multiple copies of TatA, TatB and TatC subunits, and a separate TatA complex, containing only TatA subunits. Substrates initially bind to the TatABC complex, which probably triggers association of the separate TatA complex to form the active translocon.

It localises to the cell inner membrane. Functionally, part of the twin-arginine translocation (Tat) system that transports large folded proteins containing a characteristic twin-arginine motif in their signal peptide across membranes. Together with TatC, TatB is part of a receptor directly interacting with Tat signal peptides. TatB may form an oligomeric binding site that transiently accommodates folded Tat precursor proteins before their translocation. The protein is Sec-independent protein translocase protein TatB of Rhodospirillum rubrum (strain ATCC 11170 / ATH 1.1.1 / DSM 467 / LMG 4362 / NCIMB 8255 / S1).